The chain runs to 189 residues: MTASERVVVKELSSSLLDMKFMLKKKKQIETKAAKKKEAKLDQLITEKEAEATCSTEILKSSEPKLEICYDYAKLENLKFGRLSFGGFNKEVELLMEYYEKLQNGMLSDSDDDGMDVDDEEMAKSLGGQKLAALDKKSQSKRERRQQNERNEETTGGRRFNIKDIRKRFAADDVADAPERKFMKPAEDC.

Residues 124 to 161 (KSLGGQKLAALDKKSQSKRERRQQNERNEETTGGRRFN) are disordered. Residues 133-161 (ALDKKSQSKRERRQQNERNEETTGGRRFN) show a composition bias toward basic and acidic residues.

It belongs to the MPP6 family.

This chain is Protein F29A7.6, found in Caenorhabditis elegans.